Consider the following 578-residue polypeptide: Trehalase (578 aa).

Residues 1–19 (MPGSTWELHLLLLLGLGLG) form the signal peptide. An N-linked (GlcNAc...) asparagine glycan is attached at asparagine 78. Residues arginine 168, 175–176 (WD), asparagine 212, and 221–223 (RSQ) each bind substrate. An N-linked (GlcNAc...) asparagine glycan is attached at asparagine 261. Substrate contacts are provided by residues 286 to 288 (RPE) and glycine 319. Catalysis depends on aspartate 321, which acts as the Proton donor/acceptor. Asparagine 369 is a glycosylation site (N-linked (GlcNAc...) asparagine). Glutamate 514 functions as the Proton donor/acceptor in the catalytic mechanism. Glutamate 528 contacts substrate. The GPI-anchor amidated serine moiety is linked to residue serine 555. Positions 556-578 (GTQLALLEPHCLAAALLLSFLTR) are cleaved as a propeptide — removed in mature form.

The protein belongs to the glycosyl hydrolase 37 family. As to quaternary structure, homodimer; disulfide-linked. Expressed in small intestine, kidney, and to a lesser extent in liver.

The protein localises to the cell membrane. The enzyme catalyses alpha,alpha-trehalose + H2O = alpha-D-glucose + beta-D-glucose. Its function is as follows. Intestinal trehalase is probably involved in the hydrolysis of ingested trehalose. The sequence is that of Trehalase (TREH) from Oryctolagus cuniculus (Rabbit).